The chain runs to 156 residues: ATP synthase subunit b (156 aa).

The helical transmembrane segment at 12-32 (VAFFIFVLFCMKFVWPPVIAA) threads the bilayer.

It belongs to the ATPase B chain family. In terms of assembly, F-type ATPases have 2 components, F(1) - the catalytic core - and F(0) - the membrane proton channel. F(1) has five subunits: alpha(3), beta(3), gamma(1), delta(1), epsilon(1). F(0) has three main subunits: a(1), b(2) and c(10-14). The alpha and beta chains form an alternating ring which encloses part of the gamma chain. F(1) is attached to F(0) by a central stalk formed by the gamma and epsilon chains, while a peripheral stalk is formed by the delta and b chains.

It is found in the cell inner membrane. Functionally, f(1)F(0) ATP synthase produces ATP from ADP in the presence of a proton or sodium gradient. F-type ATPases consist of two structural domains, F(1) containing the extramembraneous catalytic core and F(0) containing the membrane proton channel, linked together by a central stalk and a peripheral stalk. During catalysis, ATP synthesis in the catalytic domain of F(1) is coupled via a rotary mechanism of the central stalk subunits to proton translocation. In terms of biological role, component of the F(0) channel, it forms part of the peripheral stalk, linking F(1) to F(0). The sequence is that of ATP synthase subunit b from Pseudomonas syringae pv. syringae (strain B728a).